The following is a 98-amino-acid chain: Large ribosomal subunit protein eL21 (98 aa).

Residues 1–24 (MVKMSHGPRSGSRRKLTKSAEERK) form a disordered region.

This sequence belongs to the eukaryotic ribosomal protein eL21 family.

The chain is Large ribosomal subunit protein eL21 (rpl21e) from Thermoplasma acidophilum (strain ATCC 25905 / DSM 1728 / JCM 9062 / NBRC 15155 / AMRC-C165).